Consider the following 968-residue polypeptide: C-1-tetrahydrofolate synthase, cytoplasmic (968 aa).

The tract at residues 1-338 (MSAQYQRFLK…ERLAKSQWAL (338 aa)) is methylenetetrahydrofolate dehydrogenase and cyclohydrolase. Substrate is bound by residues 86-90 (YIRMK) and 133-135 (VQM). Residues 205–207 (GRS) and Ser-230 contribute to the NADP(+) site. 305 to 309 (PGGVG) provides a ligand contact to substrate. Residues 339-968 (QTLPLKPQRP…TETGEIEGLF (630 aa)) form a formyltetrahydrofolate synthetase region. 413–420 (TPLGEGKT) contributes to the ATP binding site.

The protein in the N-terminal section; belongs to the tetrahydrofolate dehydrogenase/cyclohydrolase family. This sequence in the C-terminal section; belongs to the formate--tetrahydrofolate ligase family. Homodimer. Present in all tissues.

It is found in the cytoplasm. The enzyme catalyses (6R)-5,10-methylene-5,6,7,8-tetrahydrofolate + NADP(+) = (6R)-5,10-methenyltetrahydrofolate + NADPH. It catalyses the reaction (6R)-5,10-methenyltetrahydrofolate + H2O = (6R)-10-formyltetrahydrofolate + H(+). It carries out the reaction (6S)-5,6,7,8-tetrahydrofolate + formate + ATP = (6R)-10-formyltetrahydrofolate + ADP + phosphate. It participates in one-carbon metabolism; tetrahydrofolate interconversion. The chain is C-1-tetrahydrofolate synthase, cytoplasmic (pug) from Drosophila melanogaster (Fruit fly).